The primary structure comprises 541 residues: Phosphatidylethanolamine transferase Mcr-1 (541 aa).

The Cytoplasmic segment spans residues 1–14 (MMQHTSVWYRRSVS). A helical transmembrane segment spans residues 15-35 (PFVLVASVAVFLTATANLTFF). The Periplasmic portion of the chain corresponds to 36-47 (DKISQTYPIADN). The helical transmembrane segment at 48–68 (LGFVLTIAVVLFGAMLLITTL) threads the bilayer. Topologically, residues 69-73 (LSSYR) are cytoplasmic. A helical transmembrane segment spans residues 74–94 (YVLKPVLILLLIMGAVTSYFT). Residues 95–122 (DTYGTVYDTTMLQNALQTDQAETKDLLN) lie on the Periplasmic side of the membrane. A helical membrane pass occupies residues 123 to 143 (AAFIMRIIGLGVLPSLLVAFV). Residues 144–157 (KVDYPTWGKGLMRR) lie on the Cytoplasmic side of the membrane. A helical membrane pass occupies residues 158-178 (LGLIVASLALILLPVVAFSSH). At 179 to 541 (YASFFRVHKP…KVKDRTAFIR (363 aa)) the chain is on the periplasmic side. 2 residues coordinate Zn(2+): Glu-246 and Thr-285. 3 disulfide bridges follow: Cys-281–Cys-291, Cys-356–Cys-364, and Cys-414–Cys-422. Phosphothreonine is present on Thr-285. Residues Asp-465 and His-466 each coordinate Zn(2+).

It belongs to the phosphoethanolamine transferase family. Monomer. Post-translationally, phosphorylated at Thr-285; may represent an intermediate in the catalytic mechanism.

It is found in the cell inner membrane. The enzyme catalyses lipid A (E. coli) + a 1,2-diacyl-sn-glycero-3-phosphoethanolamine + H(+) = lipid A 4'-(2-aminoethyl diphosphate) (E. coli) + a 1,2-diacyl-sn-glycerol. Its activity is regulated as follows. EDTA may inhibit activity. May be inhibited by ethanolamine. Its function is as follows. Probably catalyzes the addition of a phosphoethanolamine moiety to lipid A. Phosphoethanolamine modification of lipid A confers polymyxin resistance. Confers resistance to polymyxin-type antibiotics such as colistin; in the E.coli strain W3110. The chain is Phosphatidylethanolamine transferase Mcr-1 (mcr1) from Escherichia coli.